Reading from the N-terminus, the 381-residue chain is Guanine nucleotide-binding protein G(olf) subunit alpha (381 aa).

Positions 1–25 (MGCLGNSSKTAEDQGVDEKERREAN) are disordered. The N-palmitoyl glycine moiety is linked to residue Gly2. Cys3 carries S-palmitoyl cysteine lipidation. Basic and acidic residues predominate over residues 10 to 25 (TAEDQGVDEKERREAN). One can recognise a G-alpha domain in the interval 41–381 (ATHRLLLLGA…RMHLKQYELL (341 aa)). Residues 44–57 (RLLLLGAGESGKST) are G1 motif. Residues Glu52, Ser53, Gly54, Lys55, Ser56, and Thr57 each coordinate GTP. Ser56 provides a ligand contact to Mg(2+). Thr178 bears the Phosphothreonine mark. Residues 183–191 (DLLRCRVLT) are G2 motif. Residues Leu185, Arg186, and Thr191 each contribute to the GTP site. Thr191 and Asp210 together coordinate Mg(2+). Positions 206–215 (FHMFDVGGQR) are G3 motif. GTP is bound by residues Gly213, Asn279, Lys280, Asp282, and Ala353. Residues 275-282 (ILFLNKQD) form a G4 motif region. Residues 351 to 356 (TCAVDT) are G5 motif.

It belongs to the G-alpha family. G(s) subfamily. As to quaternary structure, g proteins are composed of 3 units; alpha, beta and gamma. The alpha chain contains the guanine nucleotide binding site. Interacts with GAS2L2. Interacts (GDP-bound form) with RIC8B (via C-terminus); promoting GNAL folding and association with the plasma membrane.

The protein localises to the cell membrane. The catalysed reaction is GTP + H2O = GDP + phosphate + H(+). Functionally, guanine nucleotide-binding protein (G protein) involved as transducer in olfactory signal transduction controlled by G protein-coupled receptors (GPCRs). Contains the guanine nucleotide binding site and alternates between an active, GTP-bound state and an inactive, GDP-bound state. Signaling by an activated GPCR promotes GDP release and GTP binding. The alpha subunit has a low GTPase activity that converts bound GTP to GDP, thereby terminating the signal. Both GDP release and GTP hydrolysis are modulated by numerous regulatory proteins. GNAL/G(olf) alpha specifically mediates olfactory signal transduction within the olfactory neuroepithelium and the basal ganglia following GPCRs activation. Acts by promoting the specific activation of adenylyl cyclase ADCY3, resulting in increased levels of the signaling molecule cAMP. In Rattus norvegicus (Rat), this protein is Guanine nucleotide-binding protein G(olf) subunit alpha.